The following is a 556-amino-acid chain: Membrane protein insertase YidC (556 aa).

The chain crosses the membrane as a helical span at residues 7 to 27; sequence ILLVALAVVAYLMVLQWNQDY. 2 disordered regions span residues 35-59 and 126-152; these read ETAQ…GNAN and SSER…PQYS. A compositionally biased stretch (low complexity) spans 36 to 54; it reads TAQSQPAAPALPDSPSATT. A run of 4 helical transmembrane segments spans residues 365–385, 435–455, 468–488, and 513–533; these read LLGN…LAFF, LGGC…YWVL, FWIT…IMGV, and PIIF…YWVV.

Belongs to the OXA1/ALB3/YidC family. Type 1 subfamily. In terms of assembly, interacts with the Sec translocase complex via SecD. Specifically interacts with transmembrane segments of nascent integral membrane proteins during membrane integration.

It is found in the cell inner membrane. Its function is as follows. Required for the insertion and/or proper folding and/or complex formation of integral membrane proteins into the membrane. Involved in integration of membrane proteins that insert both dependently and independently of the Sec translocase complex, as well as at least some lipoproteins. Aids folding of multispanning membrane proteins. This Stutzerimonas stutzeri (strain A1501) (Pseudomonas stutzeri) protein is Membrane protein insertase YidC.